The sequence spans 648 residues: A-type voltage-gated potassium channel KCND1 (648 aa).

Residues 1–183 lie on the Cytoplasmic side of the membrane; the sequence is MAAGVATWLP…RAFENPHTST (183 aa). An interaction with KCNIP1, KCNIP2, and other family members region spans residues 2 to 20; the sequence is AAGVATWLPFARAAAVGWL. The interval 2 to 20 is interaction with KCNIP2; sequence AAGVATWLPFARAAAVGWL. 3 residues coordinate Zn(2+): His-104, Cys-131, and Cys-132. Residues 144–164 form a disordered region; that stretch reads AERLAEDEEAEQAGDGPTLPA. A helical membrane pass occupies residues 184 to 205; that stretch reads AALVFYYVTGFFIAVSVIANVV. The Extracellular portion of the chain corresponds to 206–230; sequence ETIPCRSPTRRPPREQPCGDRFPLA. Residues 231–252 traverse the membrane as a helical segment; sequence FFCMDTACVLIFTGEYLLRLFA. The Cytoplasmic segment spans residues 253–263; that stretch reads APSRCRFLRSV. A helical membrane pass occupies residues 264 to 284; that stretch reads MSLIDVVAILPYYIGLFMPKN. The Extracellular portion of the chain corresponds to 285 to 287; that stretch reads EDV. Residues 288–308 form a helical; Voltage-sensor membrane-spanning segment; sequence SGAFVTLRVFRVFRIFKFSRH. At 309-323 the chain is on the cytoplasmic side; sequence SQGLRILGYTLKSCA. Residues 310 to 323 are S4-S5 linker; it reads QGLRILGYTLKSCA. A helical transmembrane segment spans residues 324–345; sequence SELGFLLFSLTMAIIIFATVMF. Over 346–359 the chain is Extracellular; it reads YAEKGTNKTNFTSI. N-linked (GlcNAc...) asparagine glycans are attached at residues Asn-352 and Asn-355. The helical intramembrane region spans 360–371; sequence PAAFWYTIVTMT. Residues 372–377 carry the Selectivity filter motif; the sequence is TLGYGD. An intramembrane segment occupies 372-379; sequence TLGYGDMV. At 380-386 the chain is on the extracellular side; it reads PSTIAGK. A helical membrane pass occupies residues 387 to 415; sequence IFGSICSLSGVLVIALPVPVIVSNFSRIY. Residues 416 to 648 lie on the Cytoplasmic side of the membrane; the sequence is HQNQRADKRR…LPETVKISSL (233 aa). Ser-458 bears the Phosphoserine mark. The tract at residues 474–489 is mediates dendritic targeting; the sequence is FEQQHHHLLHCLEKTT. The interval 474-489 is required for dendritic targeting; it reads FEQQHHHLLHCLEKTT. Phosphoserine is present on Ser-555. Residues 601–636 are disordered; sequence IPTPPANTPDESQPSSPGGGGGGASSTLRNSSLGTP.

The protein belongs to the potassium channel family. D (Shal) (TC 1.A.1.2) subfamily. Kv4.1/KCND1 sub-subfamily. As to quaternary structure, component of heteromultimeric potassium channels. Identified in potassium channel complexes containing KCND1, KCND2, KCND3, KCNIP1, KCNIP2, KCNIP3, KCNIP4, DPP6 and DPP10.

It localises to the cell membrane. The catalysed reaction is K(+)(in) = K(+)(out). A-type voltage-gated potassium channel that mediates transmembrane potassium transport in excitable membranes in the brain. Mediates A-type current I(SA) in suprachiasmatic nucleus (SCN) neurons. Exhibits a low-threshold A-type current with a hyperpolarized steady-state inactivation midpoint and the recovery process was steeply voltage-dependent, with recovery being markedly faster at more negative potentials. May regulates repetitive firing rates in the suprachiasmatic nucleus (SCN) neurons and circadian rhythms in neuronal excitability and behavior. Contributes to the regulation of the circadian rhythm of action potential firing in suprachiasmatic nucleus neurons, which regulates the circadian rhythm of locomotor activity. The regulatory subunit KCNIP1 modulates the kinetics of channel inactivation, increases the current amplitudes and accelerates recovery from inactivation, shifts activation in a depolarizing direction. The regulatory subunit DPP10 decreases the voltage sensitivity of the inactivation channel gating. In Bos taurus (Bovine), this protein is A-type voltage-gated potassium channel KCND1.